Here is a 303-residue protein sequence, read N- to C-terminus: UDP-3-O-acyl-N-acetylglucosamine deacetylase (303 aa).

Residues His78, His237, and Asp241 each contribute to the Zn(2+) site. Residue His264 is the Proton donor of the active site.

It belongs to the LpxC family. It depends on Zn(2+) as a cofactor.

It catalyses the reaction a UDP-3-O-[(3R)-3-hydroxyacyl]-N-acetyl-alpha-D-glucosamine + H2O = a UDP-3-O-[(3R)-3-hydroxyacyl]-alpha-D-glucosamine + acetate. It functions in the pathway glycolipid biosynthesis; lipid IV(A) biosynthesis; lipid IV(A) from (3R)-3-hydroxytetradecanoyl-[acyl-carrier-protein] and UDP-N-acetyl-alpha-D-glucosamine: step 2/6. Its function is as follows. Catalyzes the hydrolysis of UDP-3-O-myristoyl-N-acetylglucosamine to form UDP-3-O-myristoylglucosamine and acetate, the committed step in lipid A biosynthesis. In Xanthomonas oryzae pv. oryzae (strain MAFF 311018), this protein is UDP-3-O-acyl-N-acetylglucosamine deacetylase.